The primary structure comprises 154 residues: Nuclear cap-binding protein subunit 2 (154 aa).

Residues Tyr10, Tyr33, 102–106 (RCDWD), 113–117 (RQYGR), and 123–124 (QV) contribute to the mRNA site. An RRM domain is found at 30–108 (STLYMGNLSF…RIIRCDWDAG (79 aa)).

Belongs to the RRM NCBP2 family. In terms of assembly, component of the nuclear cap-binding complex (CBC), a heterodimer composed of Cbp80 and Cbp20 that interacts with m7GpppG-capped RNA.

It localises to the nucleus. Its function is as follows. Component of the cap-binding complex (CBC), which binds co-transcriptionally to the 5' cap of pre-mRNAs and is involved in various processes such as pre-mRNA splicing and RNA-mediated gene silencing (RNAi). The CBC complex is involved in miRNA-mediated RNA interference and is required for primary microRNAs (miRNAs) processing. Also involved in innate immunity via the short interfering RNAs (siRNAs) processing machinery by restricting the viral RNA production. In the CBC complex, Cbp20 recognizes and binds capped RNAs (m7GpppG-capped RNA) but requires Cbp80 to stabilize the movement of its N-terminal loop and lock the CBC into a high affinity cap-binding state with the cap structure. The chain is Nuclear cap-binding protein subunit 2 from Bombyx mori (Silk moth).